The following is a 445-amino-acid chain: Tubulin beta-3 chain (445 aa).

Positions 1-4 (MREI) match the MREI motif motif. GTP contacts are provided by Q11, E69, S138, G142, T143, G144, N204, and N226. E69 contacts Mg(2+). A disordered region spans residues 425 to 445 (YQDATAEEEGEFEEEAEEEAE). Residues 429-445 (TAEEEGEFEEEAEEEAE) are compositionally biased toward acidic residues. E438 bears the 5-glutamyl polyglutamate mark.

The protein belongs to the tubulin family. Dimer of alpha and beta chains. A typical microtubule is a hollow water-filled tube with an outer diameter of 25 nm and an inner diameter of 15 nM. Alpha-beta heterodimers associate head-to-tail to form protofilaments running lengthwise along the microtubule wall with the beta-tubulin subunit facing the microtubule plus end conferring a structural polarity. Microtubules usually have 13 protofilaments but different protofilament numbers can be found in some organisms and specialized cells. Mg(2+) is required as a cofactor. In terms of processing, some glutamate residues at the C-terminus are polyglycylated, resulting in polyglycine chains on the gamma-carboxyl group. Glycylation is mainly limited to tubulin incorporated into axonemes (cilia and flagella) whereas glutamylation is prevalent in neuronal cells, centrioles, axonemes, and the mitotic spindle. Both modifications can coexist on the same protein on adjacent residues, and lowering polyglycylation levels increases polyglutamylation, and reciprocally. The precise function of polyglycylation is still unclear. Post-translationally, some glutamate residues at the C-terminus are polyglutamylated, resulting in polyglutamate chains on the gamma-carboxyl group. Polyglutamylation plays a key role in microtubule severing by spastin (SPAST). SPAST preferentially recognizes and acts on microtubules decorated with short polyglutamate tails: severing activity by SPAST increases as the number of glutamates per tubulin rises from one to eight, but decreases beyond this glutamylation threshold. As to expression, highly expressed in testis.

It is found in the cytoplasm. The protein localises to the cytoskeleton. Functionally, tubulin is the major constituent of microtubules, a cylinder consisting of laterally associated linear protofilaments composed of alpha- and beta-tubulin heterodimers. Microtubules grow by the addition of GTP-tubulin dimers to the microtubule end, where a stabilizing cap forms. Below the cap, tubulin dimers are in GDP-bound state, owing to GTPase activity of alpha-tubulin. TUBB3 plays a role in dorsal root ganglion axon projection towards the spinal cord. The chain is Tubulin beta-3 chain from Gallus gallus (Chicken).